The primary structure comprises 89 residues: UPF0298 protein GTNG_0961 (89 aa).

Belongs to the UPF0298 family.

The protein resides in the cytoplasm. In Geobacillus thermodenitrificans (strain NG80-2), this protein is UPF0298 protein GTNG_0961.